A 449-amino-acid polypeptide reads, in one-letter code: Heterogeneous nuclear ribonucleoprotein H (449 aa).

An N-acetylmethionine modification is found at M1. M2 is subject to N-acetylmethionine; in Heterogeneous nuclear ribonucleoprotein H, N-terminally processed. In terms of domain architecture, RRM 1 spans 11 to 90; sequence FVVKVRGLPW…RYVEVFKSNN (80 aa). S23 carries the post-translational modification Phosphoserine. A Glycyl lysine isopeptide (Lys-Gly) (interchain with G-Cter in SUMO2) cross-link involves residue K35. A phosphoserine mark is found at S54 and S63. Glycyl lysine isopeptide (Lys-Gly) (interchain with G-Cter in SUMO2) cross-links involve residues K87 and K98. Positions 111-188 constitute an RRM 2 domain; that stretch reads GFVRLRGLPF…RYIEIFKSSR (78 aa). R233 carries the dimethylated arginine; alternate modification. R233 is modified (omega-N-methylarginine; alternate). The 1-1 repeat unit spans residues 234–249; the sequence is GAYGGGYGGYDDYNGY. The tract at residues 234–433 is 2 X 16 AA Gly-rich approximate repeats; that stretch reads GAYGGGYGGY…YGGQSSMSGY (200 aa). At Y246 the chain carries Phosphotyrosine. An RRM 3 domain is found at 289 to 364; it reads HCVHMRGLPY…RYVELFLNST (76 aa). Phosphoserine is present on S310. A run of 3 repeats spans residues 354–372, 374–392, and 418–433. The tract at residues 354 to 392 is 2 X 19 AA perfect repeats; sequence HRYVELFLNSTAGASGGAYEHRYVELFLNSTAGASGGAY.

In terms of assembly, part of a ternary complex containing FUBP2, PTBP1, PTBP2 and HNRNPH1. Identified in the spliceosome C complex. Interacts with IGF2BP1. Interacts with CUGBP1; the interaction is RNA-dependent. Interacts with MBNL1; the interaction in RNA-independent.

The protein localises to the nucleus. It is found in the nucleoplasm. Functionally, this protein is a component of the heterogeneous nuclear ribonucleoprotein (hnRNP) complexes which provide the substrate for the processing events that pre-mRNAs undergo before becoming functional, translatable mRNAs in the cytoplasm. Mediates pre-mRNA alternative splicing regulation. Inhibits, together with CUGBP1, insulin receptor (IR) pre-mRNA exon 11 inclusion in myoblast. Binds to the IR RNA. Binds poly(RG). The chain is Heterogeneous nuclear ribonucleoprotein H (Hnrnph1) from Rattus norvegicus (Rat).